Here is an 825-residue protein sequence, read N- to C-terminus: Zinc finger protein 28 (825 aa).

Residues 26-65 (RPGGGPAAGTVVAPGSPDRGRPRSRNSLASQDQQGAVTSG) form a disordered region. Low complexity predominate over residues 33 to 42 (AGTVVAPGSP). Over residues 51–65 (NSLASQDQQGAVTSG) the composition is skewed to polar residues. Residues 103 to 174 (VTFGDVAVVF…KRKMRKGQHL (72 aa)) form the KRAB domain. 14 C2H2-type zinc fingers span residues 377–399 (FQCN…QRIH), 405–427 (YKCN…QRCH), 433–456 (YECP…RYYH), 462–484 (FDCI…RRIH), 490–512 (YTCE…QRIH), 518–540 (YECE…QRVH), 546–568 (FKCK…WRIH), 574–596 (FECG…QRIH), 602–624 (YECK…QKTH), 630–652 (YECK…QRVH), 658–680 (YKCL…RRLH), 686–708 (YECV…RRCH), 714–736 (YECS…QRIH), and 742–764 (YECK…KRVH). A C2H2-type 15; degenerate zinc finger spans residues 770-792 (YNYKKGRRAFRQTAHFAHHQQIH).

The protein belongs to the krueppel C2H2-type zinc-finger protein family. Expressed predominantly in ovary.

It localises to the nucleus. In terms of biological role, may be involved in transcriptional regulation. May have a role in embryonic development. The polypeptide is Zinc finger protein 28 (Zfp28) (Mus musculus (Mouse)).